The sequence spans 292 residues: Phosphotriesterase homology protein (292 aa).

Zn(2+) contacts are provided by His-12, His-14, and Glu-125. 148–149 lines the beta-D-glucose pocket; the sequence is HN. His-158 provides a ligand contact to Zn(2+). Beta-D-glucose-binding residues include Gly-176, Asp-178, and Arg-181. His-186 and Asp-243 together coordinate Zn(2+). Positions 280 and 284 each coordinate beta-D-glucose.

Belongs to the metallo-dependent hydrolases superfamily. Phosphotriesterase family. As to quaternary structure, monomer. Zn(2+) serves as cofactor.

Its activity is regulated as follows. Activity is higher in the enzyme containing Mn(2+) than that containing Zn(2+). Functionally, catalyzes the hydrolysis of phosphorylated glyceryl acetates in which the presence of a phosphate group is required for the enzymatic hydrolysis. Hydrolyzes a dibutyl glycerol derivative suggesting it acts on phosphoglycerol substrates with a butyrate leaving group. Also active with aromatic acetates and propionates. No activity with various sugar phosphates, with various nitrophenylphosphate or nitrophenylphosphonate derivatives, or with phosphorylated or non-phosphorylated sugar lactones tested. Does not hydrolyze non-phosphorylated carboxyesters with long chain leaving groups. No general esterase, aminopeptidase, sulfatase, phosphatase, carbonic anhydrase, phosphodiesterase, and phosphotriesterase activities detected when tested with the following non-specific substrates: p-nitrophenyl acetate, L-alanine nitroanilide, p-nitrophenyl sulfate, bis(p-nitrophenyl) phosphate, paraoxon, and p-nitrophenyl phosphate. This Escherichia coli (strain K12) protein is Phosphotriesterase homology protein.